The following is a 1196-amino-acid chain: [NU+] prion formation protein 1 (1196 aa).

Disordered regions lie at residues 1-49 and 103-125; these read MPPK…KSSY and TYKQSAVTPNQSGTPTPSASTTS. Composition is skewed to polar residues over residues 39–49 and 103–113; these read GSNNASKKSSY and TYKQSAVTPNQ. A compositionally biased stretch (low complexity) spans 114–125; that stretch reads SGTPTPSASTTS. Residue Ser443 is modified to Phosphoserine. ABC transporter domains follow at residues 570 to 786 and 812 to 1129; these read IEIV…YYTL and AKMT…ADAV. ATP contacts are provided by residues 604–611 and 846–853; these read GRNGAGKS and GPNGAGKS. The Chromo domain maps to 942 to 1003; the sequence is RAIEAIVGRQ…HEASREGLGY (62 aa). Disordered regions lie at residues 1137–1166 and 1177–1196; these read AKPSVDDDDSPANIKVKQRKKRLTRNEKKL and EWLSSPKGTPKPVDTDDEED. Thr1191 is subject to Phosphothreonine.

Belongs to the ABC transporter superfamily. ABCF family. EF3 subfamily.

The protein resides in the cytoplasm. Its subcellular location is the nucleus. Its function is as follows. May be involved in the mRNA export process. Forms the [NU+] prion and induces [PSI+] prion formation. This chain is [NU+] prion formation protein 1 (NEW1), found in Saccharomyces cerevisiae (strain ATCC 204508 / S288c) (Baker's yeast).